A 513-amino-acid polypeptide reads, in one-letter code: Probable helicase MJ1565 (513 aa).

ATP is bound by residues R151, 160–165, and 467–468; these read GMGKSN and KV.

The protein belongs to the HerA family.

It catalyses the reaction Couples ATP hydrolysis with the unwinding of duplex DNA at the replication fork by translocating in the 5'-3' direction. This creates two antiparallel DNA single strands (ssDNA). The leading ssDNA polymer is the template for DNA polymerase III holoenzyme which synthesizes a continuous strand.. The catalysed reaction is ATP + H2O = ADP + phosphate + H(+). The enzyme catalyses Couples ATP hydrolysis with the unwinding of duplex DNA by translocating in the 3'-5' direction.. Functionally, a probably bidirectional DNA helicase. This is Probable helicase MJ1565 from Methanocaldococcus jannaschii (strain ATCC 43067 / DSM 2661 / JAL-1 / JCM 10045 / NBRC 100440) (Methanococcus jannaschii).